The sequence spans 455 residues: 3-isopropylmalate dehydratase large subunit (455 aa).

Positions 337, 397, and 400 each coordinate [4Fe-4S] cluster.

This sequence belongs to the aconitase/IPM isomerase family. LeuC type 1 subfamily. Heterodimer of LeuC and LeuD. [4Fe-4S] cluster is required as a cofactor.

The catalysed reaction is (2R,3S)-3-isopropylmalate = (2S)-2-isopropylmalate. The protein operates within amino-acid biosynthesis; L-leucine biosynthesis; L-leucine from 3-methyl-2-oxobutanoate: step 2/4. Functionally, catalyzes the isomerization between 2-isopropylmalate and 3-isopropylmalate, via the formation of 2-isopropylmaleate. The chain is 3-isopropylmalate dehydratase large subunit from Leuconostoc citreum (strain KM20).